The sequence spans 70 residues: ATP synthase subunit c (70 aa).

Helical transmembrane passes span 4-24 (IAAAIAIGLGALGAGIGNGLI) and 49-69 (GIALVEALPIIAVVIAFLAFF).

The protein belongs to the ATPase C chain family. F-type ATPases have 2 components, F(1) - the catalytic core - and F(0) - the membrane proton channel. F(1) has five subunits: alpha(3), beta(3), gamma(1), delta(1), epsilon(1). F(0) has three main subunits: a(1), b(2) and c(10-14). The alpha and beta chains form an alternating ring which encloses part of the gamma chain. F(1) is attached to F(0) by a central stalk formed by the gamma and epsilon chains, while a peripheral stalk is formed by the delta and b chains. The F(1)F(0) complex interacts with SpoIIIJ and YqjG; YqgA is found in the same complex.

It is found in the cell membrane. Its function is as follows. F(1)F(0) ATP synthase produces ATP from ADP in the presence of a proton or sodium gradient. F-type ATPases consist of two structural domains, F(1) containing the extramembraneous catalytic core and F(0) containing the membrane proton channel, linked together by a central stalk and a peripheral stalk. During catalysis, ATP synthesis in the catalytic domain of F(1) is coupled via a rotary mechanism of the central stalk subunits to proton translocation. In terms of biological role, key component of the F(0) channel; it plays a direct role in translocation across the membrane. A homomeric c-ring of between 10-14 subunits forms the central stalk rotor element with the F(1) delta and epsilon subunits. The polypeptide is ATP synthase subunit c (Bacillus subtilis (strain 168)).